A 739-amino-acid chain; its full sequence is Double-strand break repair protein mus-23 (739 aa).

Residues aspartate 16, histidine 18, aspartate 56, and asparagine 123 each coordinate Mn(2+). Catalysis depends on histidine 124, which acts as the Proton donor. Mn(2+)-binding residues include histidine 212, histidine 240, and histidine 242. Residues 516–739 (FDAGQHKQAQ…KPGLLARRLG (224 aa)) form a disordered region. Residues 523-532 (QAQRTKRFKR) show a composition bias toward basic residues. Positions 559 to 568 (VEPKGNDRPT) are enriched in basic and acidic residues. Residues 599–636 (KRGAAAKTTAAAKKAAPGKKAAPAKKAAPAKKAAPAKK) show a composition bias toward low complexity. A compositionally biased stretch (basic residues) spans 637 to 646 (APARGRKKKT). The span at 650-686 (DSDEEEEEDYPEDDDEEEEEADEEEEDVIMEDDEEDP) shows a compositional bias: acidic residues. Residues 694 to 722 (KATSRVASTRASARATPVRATPARATQAR) show a composition bias toward low complexity.

The protein belongs to the MRE11/RAD32 family. In terms of assembly, component of the MRN complex composed of two heterodimers RAD50 and MRE11 associated with a single NBS1. Mn(2+) serves as cofactor.

It is found in the nucleus. It localises to the chromosome. Its subcellular location is the telomere. Core component of the MRN complex, which plays a central role in double-strand break (DSB) repair, DNA recombination, maintenance of telomere integrity and meiosis. The MRN complex is involved in the repair of DNA double-strand breaks (DSBs) via homologous recombination (HR), an error-free mechanism which primarily occurs during S and G2 phases. The complex (1) mediates the end resection of damaged DNA, which generates proper single-stranded DNA, a key initial steps in HR, and is (2) required for the recruitment of other repair factors and efficient activation of ATM and ATR upon DNA damage. Within the MRN complex, MRE11 possesses both single-strand endonuclease activity and double-strand-specific 3'-5' exonuclease activity. MRE11 first endonucleolytically cleaves the 5' strand at DNA DSB ends to prevent non-homologous end joining (NHEJ) and licence HR. It then generates a single-stranded DNA gap via 3' to 5' exonucleolytic degradation, which is required for single-strand invasion and recombination. The MRN complex is also required for the processing of R-loops. This is Double-strand break repair protein mus-23 (mus-23) from Neurospora crassa (strain ATCC 24698 / 74-OR23-1A / CBS 708.71 / DSM 1257 / FGSC 987).